A 66-amino-acid chain; its full sequence is Large ribosomal subunit protein bL31 (66 aa).

Zn(2+) contacts are provided by Cys-16, Cys-18, Cys-36, and Cys-39.

This sequence belongs to the bacterial ribosomal protein bL31 family. Type A subfamily. Part of the 50S ribosomal subunit. Requires Zn(2+) as cofactor.

Its function is as follows. Binds the 23S rRNA. This Moorella thermoacetica (strain ATCC 39073 / JCM 9320) protein is Large ribosomal subunit protein bL31.